Reading from the N-terminus, the 159-residue chain is Nanos homolog 3 (159 aa).

Residues 42-87 are disordered; that stretch reads QEMQSDADSDEQAAALLESPSGPIRSRDSPEQNTSPGGGKPKSSPA. The segment at 91-145 adopts a Nanos-type zinc-finger fold; the sequence is FCSFCKHNGETEAVYTSHYLKNRDGDVMCPYLRQYKCPLCGATGAKAHTKRFCPM. Positions 92, 95, 108, 119, 127, 130, 138, and 143 each coordinate Zn(2+). 2 consecutive short sequence motifs (C2HC) follow at residues 92–119 and 127–143; these read CSFC…DVMC and CPLC…KRFC. The interval 92–159 is interaction with mylpfa; sequence CSFCKHNGET…YCSVYAKSTW (68 aa).

Belongs to the nanos family. Interacts (via C-terminus) with myosin mylpfa/mylz2; the interaction negatively regulates mylpfa phosphorylation. As to expression, in the embryo, displays early ubiquitous expression before being restricted to primordial germ cells in a 3'-UTR-dependent manner. Expressed in early stage germ cells in larval and adult ovaries.

The protein resides in the cytoplasm. Its subcellular location is the perinuclear region. In terms of biological role, RNA-binding protein which binds to RNA with no sequence specificity. Probably represses translation of specific mRNAs. Essential for the development of primordial germ cells (PGCs) by ensuring their proper migration and survival but is not required for PGC specification. Also required to maintain oocyte production in the adult ovary. Negatively regulates phosphorylation of myosin mylpfa/mylz2. This chain is Nanos homolog 3, found in Danio rerio (Zebrafish).